The primary structure comprises 1110 residues: Isoleucine--tRNA ligase (1110 aa).

A 'HIGH' region motif is present at residues 47 to 57; it reads PSANGTPGIHH. The 'KMSKS' region motif lies at 658-662; the sequence is KMSKR. Position 661 (K661) interacts with ATP.

Belongs to the class-I aminoacyl-tRNA synthetase family. IleS type 2 subfamily. In terms of assembly, monomer. The cofactor is Zn(2+).

It is found in the cytoplasm. The catalysed reaction is tRNA(Ile) + L-isoleucine + ATP = L-isoleucyl-tRNA(Ile) + AMP + diphosphate. Catalyzes the attachment of isoleucine to tRNA(Ile). As IleRS can inadvertently accommodate and process structurally similar amino acids such as valine, to avoid such errors it has two additional distinct tRNA(Ile)-dependent editing activities. One activity is designated as 'pretransfer' editing and involves the hydrolysis of activated Val-AMP. The other activity is designated 'posttransfer' editing and involves deacylation of mischarged Val-tRNA(Ile). This chain is Isoleucine--tRNA ligase, found in Cytophaga hutchinsonii (strain ATCC 33406 / DSM 1761 / CIP 103989 / NBRC 15051 / NCIMB 9469 / D465).